Consider the following 293-residue polypeptide: Methylsterol monooxygenase 1 (293 aa).

A run of 2 helical transmembrane segments spans residues 55–75 (LIVH…FQFI) and 100–120 (GILF…YYFT). Residues 144 to 274 (GCAVIEDTWH…FTWWDRIFGT (131 aa)) enclose the Fatty acid hydroxylase domain. The Histidine box-1 signature appears at 157 to 161 (HRLLH). A Histidine box-2 motif is present at residues 170–174 (HKVHH). Residues 199-219 (FFIGIVLLCDHVILLWAWVTM) form a helical membrane-spanning segment. The Histidine box-3 motif lies at 249 to 255 (HHDFHHM).

Belongs to the sterol desaturase family. It depends on Fe cation as a cofactor. Ubiquitinated by MARCHF6, leading to proteasomal degradation.

The protein localises to the endoplasmic reticulum membrane. It carries out the reaction 4,4-dimethyl-5alpha-cholest-7-en-3beta-ol + 6 Fe(II)-[cytochrome b5] + 3 O2 + 5 H(+) = 4alpha-carboxy-4beta-methyl-5alpha-cholest-7-ene-3beta-ol + 6 Fe(III)-[cytochrome b5] + 4 H2O. The enzyme catalyses 4,4-dimethyl-5alpha-cholesta-8,24-dien-3beta-ol + 6 Fe(II)-[cytochrome b5] + 3 O2 + 5 H(+) = 4beta-methylzymosterol-4alpha-carboxylate + 6 Fe(III)-[cytochrome b5] + 4 H2O. The catalysed reaction is 4alpha-methylzymosterol + 6 Fe(II)-[cytochrome b5] + 3 O2 + 5 H(+) = 4alpha-carboxyzymosterol + 6 Fe(III)-[cytochrome b5] + 4 H2O. It catalyses the reaction 4alpha-methyl-5alpha-cholest-7-en-3beta-ol + 6 Fe(II)-[cytochrome b5] + 3 O2 + 5 H(+) = 4alpha-carboxy-5alpha-cholest-7-en-3beta-ol + 6 Fe(III)-[cytochrome b5] + 4 H2O. It carries out the reaction 4,4-dimethyl-5alpha-cholest-8-en-3beta-ol + 6 Fe(II)-[cytochrome b5] + 3 O2 + 5 H(+) = 4alpha-carboxy-4beta-methyl-5alpha-cholest-8-en-3beta-ol + 6 Fe(III)-[cytochrome b5] + 4 H2O. The enzyme catalyses 4alpha-methyl-5alpha-cholest-8-en-3beta-ol + 6 Fe(II)-[cytochrome b5] + 3 O2 + 5 H(+) = 4alpha-carboxy-5alpha-cholest-8-ene-3beta-ol + 6 Fe(III)-[cytochrome b5] + 4 H2O. The protein operates within steroid biosynthesis; zymosterol biosynthesis; zymosterol from lanosterol: step 3/6. It participates in steroid biosynthesis; cholesterol biosynthesis. Functionally, catalyzes the three-step monooxygenation required for the demethylation of 4,4-dimethyl and 4alpha-methylsterols, which can be subsequently metabolized to cholesterol. The sequence is that of Methylsterol monooxygenase 1 (Msmo1) from Rattus norvegicus (Rat).